Consider the following 287-residue polypeptide: NAD-dependent protein deacylase sir-2.2 (287 aa).

The Deacetylase sirtuin-type domain maps to 10–287 (AELCENSLKK…YKISDVLKEM (278 aa)). NAD(+)-binding positions include 35 to 55 (GAGISTESGIPDYRSKDVGLY) and 116 to 119 (QNVD). The active-site Proton acceptor is the His134. Positions 142, 145, 196, and 199 each coordinate Zn(2+). Residues 236-238 (GTS), 262-264 (NIG), and Ile280 contribute to the NAD(+) site.

It belongs to the sirtuin family. Class II subfamily. In terms of assembly, interacts with pyc-1, pcca-1 and mccc-1. Zn(2+) is required as a cofactor. As to expression, ubiquitously expressed with high expression in the pharynx, body wall muscles and gonad.

It localises to the mitochondrion matrix. Its subcellular location is the mitochondrion. The enzyme catalyses N(6)-acetyl-L-lysyl-[protein] + NAD(+) + H2O = 2''-O-acetyl-ADP-D-ribose + nicotinamide + L-lysyl-[protein]. Its function is as follows. NAD-dependent protein deacylase. Catalyzes the NAD-dependent hydrolysis of acyl groups from lysine residues. Plays a role in oxidative stress resistance. The sequence is that of NAD-dependent protein deacylase sir-2.2 (sir-2.2) from Caenorhabditis elegans.